The primary structure comprises 151 residues: Deazaflavin-dependent nitroreductase (151 aa).

Coenzyme F420-(gamma-Glu)n is bound by residues 54-56 (RKT), 60-65 (RVNPLY), 76-79 (AASK), 87-91 (MWYLN), and tyrosine 133.

The protein belongs to the F420H(2)-dependent quinone reductase family.

The protein resides in the cell membrane. The enzyme catalyses oxidized coenzyme F420-(gamma-L-Glu)(n) + a quinol + H(+) = reduced coenzyme F420-(gamma-L-Glu)(n) + a quinone. Involved in a F420-dependent anti-oxidant mechanism that protects M.tuberculosis against oxidative stress and bactericidal agents. Catalyzes the F420H(2)-dependent two-electron reduction of quinones to dihydroquinones, thereby preventing the formation of cytotoxic semiquinones obtained by the one-electron reduction pathway. In vitro, catalyzes the reduction of both benzoquinone and naphthoquinone analogs; since menaquinone is the sole quinone electron carrier in the respiratory chain in M.tuberculosis, the physiological electron acceptor for Fqr-mediated F420H(2) oxidation is therefore likely to be the endogenous menaquinone found in the membrane fraction of M.tuberculosis. Is able to use F420 species with two and five glutamate residues in its polyglutamate tail. Cannot use NADH or NADPH instead of F420H(2) as the electron donor. Functionally, is involved in the bioreductive activation of bicyclic 4-nitroimidazole prodrugs such as PA-824 and delamanid developed for anti-tuberculosis therapy against both replicating and persistent bacteria. It converts PA-824 into three primary metabolites resulting from reduction of the imidazole ring at C-3; the major one is the corresponding des-nitroimidazole that generates lethal reactive nitrogen species, including nitric oxide (NO), which appears to be responsible for the anaerobic killing activity. Ddn uses the reduced F420 produced by FGD1 to activate PA-824. Delamanid (OPC-67683) is also reduced by Ddn to its des-nitro form. The protein is Deazaflavin-dependent nitroreductase (ddn) of Mycobacterium tuberculosis (strain CDC 1551 / Oshkosh).